The sequence spans 1915 residues: Protein TIC 214 (1915 aa).

The next 6 helical transmembrane spans lie at I18–G38, F64–L84, I90–F110, L126–L146, V174–I194, and I230–L250. Disordered stretches follow at residues K260 to V319 and N1566 to L1631. The span at S267 to T277 shows a compositional bias: acidic residues. The span at S279–Q288 shows a compositional bias: basic and acidic residues. The span at E304–E315 shows a compositional bias: acidic residues. The span at K1587–S1601 shows a compositional bias: basic and acidic residues. Over residues S1602–L1631 the composition is skewed to polar residues.

It belongs to the TIC214 family. In terms of assembly, part of the Tic complex.

The protein localises to the plastid. It localises to the chloroplast inner membrane. Functionally, involved in protein precursor import into chloroplasts. May be part of an intermediate translocation complex acting as a protein-conducting channel at the inner envelope. The protein is Protein TIC 214 of Platanus occidentalis (Sycamore).